Reading from the N-terminus, the 225-residue chain is RNA-binding protein 24-A (225 aa).

The 78-residue stretch at 11–88 (TKIFVGGLPY…RKANVNLAYL (78 aa)) folds into the RRM domain.

The protein localises to the nucleus. The protein resides in the cytoplasm. Functionally, multifunctional RNA-binding protein involved in the regulation of pre-mRNA splicing, mRNA stability and mRNA translation important for cell fate decision and differentiation. Plays a major role in pre-mRNA alternative splicing regulation. Mediates preferentially muscle-specific exon inclusion in numerous mRNAs important for striated cardiac and skeletal muscle cell differentiation. Binds to intronic splicing enhancer (ISE) composed of stretches of GU-rich motifs localized in flanking intron of exon that will be included by alternative splicing. Involved in embryonic stem cell (ESC) transition to cardiac cell differentiation by promoting pre-mRNA alternative splicing events of several pluripotency and/or differentiation genes. Plays a role in the regulation of mRNA stability and mRNA translation to which it is bound. Involved in myogenic differentiation by regulating myog levels. Binds to a huge amount of mRNAs. Required for embryonic heart development, sarcomer and M-band formation in striated muscles. The sequence is that of RNA-binding protein 24-A (rbm24-a) from Xenopus laevis (African clawed frog).